The chain runs to 145 residues: uncharacterized protein (145 aa).

Residues 1–145 (LQYRAADTNA…NGQIVWGTAP (145 aa)) form the CBM3 domain.

This is an uncharacterized protein from Paenibacillus lautus (Bacillus lautus).